The sequence spans 279 residues: Urease accessory protein UreD (279 aa).

It belongs to the UreD family. In terms of assembly, ureD, UreF and UreG form a complex that acts as a GTP-hydrolysis-dependent molecular chaperone, activating the urease apoprotein by helping to assemble the nickel containing metallocenter of UreC. The UreE protein probably delivers the nickel.

It is found in the cytoplasm. Its function is as follows. Required for maturation of urease via the functional incorporation of the urease nickel metallocenter. The protein is Urease accessory protein UreD of Pseudomonas fluorescens (strain ATCC BAA-477 / NRRL B-23932 / Pf-5).